The chain runs to 390 residues: Fer-related kinase 1 (390 aa).

Residues 23–119 (YYHGMVPRQD…ASGAKIRRPM (97 aa)) form the SH2 domain. The Protein kinase domain occupies 131-386 (IVANKKLGEG…SIHKKLREFY (256 aa)). ATP-binding positions include 137–145 (LGEGAFGDV) and Lys-161. Residue Asp-252 is the Proton acceptor of the active site.

The protein belongs to the protein kinase superfamily. Tyr protein kinase family. Fes/fps subfamily. As to quaternary structure, interacts with hmp-2. Requires Mn(2+) as cofactor.

It is found in the nucleus. The protein resides in the cytoplasm. The protein localises to the cell junction. It localises to the cell membrane. It catalyses the reaction L-tyrosyl-[protein] + ATP = O-phospho-L-tyrosyl-[protein] + ADP + H(+). Its function is as follows. Non-receptor tyrosine-protein kinase which plays a role in morphogenesis by regulating the epidermal enclosure of the embryo, independently of its kinase activity. Prevents hyperactivation of the Wnt signaling pathway during endoderm development, probably by preventing hmp-2 nuclear translocation. In Caenorhabditis elegans, this protein is Fer-related kinase 1.